The sequence spans 300 residues: Jacalin-related lectin 33 (300 aa).

The segment at Met1–Val20 is disordered. Ala2 is modified (N-acetylalanine). Jacalin-type lectin domains are found at residues Ala2 to Thr146 and Ala154 to Pro297.

It belongs to the jacalin lectin family. Component of the PYK10 complex, at least composed of PYK10/BGLU23, BGLU21, BGLU22, JAL22, JAL23, PBP1/JAL30, PBP2/JAL31, JAL32, JAL33, JAL34, JAL35, GLL22 and GLL23.

Sugar-binding protein showing significant affinity for (Glc alpha(1-4)Glc)(3) maltohexaose, (Glc alpha(1-6)Glc)(3) isomaltohexaose, Gal alpha(1-4)Gal beta(1-4)Glc, GalNAc alpha(1-3)(Fuc alpha(1-2)) and Gal beta(1-3)(Fuc alpha(1-4))GlcNAc beta(1-3)Gal beta(1-4)Glc. This is Jacalin-related lectin 33 (JAL33) from Arabidopsis thaliana (Mouse-ear cress).